The primary structure comprises 144 residues: Universal stress protein F (144 aa).

It belongs to the universal stress protein A family. Homodimer.

In Escherichia coli O157:H7, this protein is Universal stress protein F (uspF).